A 335-amino-acid chain; its full sequence is Ferrochelatase (335 aa).

Positions 207 and 288 each coordinate Fe cation.

Belongs to the ferrochelatase family.

The protein localises to the cytoplasm. The enzyme catalyses heme b + 2 H(+) = protoporphyrin IX + Fe(2+). It participates in porphyrin-containing compound metabolism; protoheme biosynthesis; protoheme from protoporphyrin-IX: step 1/1. Functionally, catalyzes the ferrous insertion into protoporphyrin IX. The sequence is that of Ferrochelatase from Helicobacter pylori (strain G27).